Consider the following 255-residue polypeptide: 4-hydroxy-tetrahydrodipicolinate reductase (255 aa).

Residues 8 to 13, 89 to 91, and 114 to 117 each bind NAD(+); these read GASGRM, GTT, and SSNY. H146 serves as the catalytic Proton donor/acceptor. H147 contacts (S)-2,3,4,5-tetrahydrodipicolinate. K150 serves as the catalytic Proton donor. 156–157 is a binding site for (S)-2,3,4,5-tetrahydrodipicolinate; the sequence is GT.

The protein belongs to the DapB family.

The protein localises to the cytoplasm. It catalyses the reaction (S)-2,3,4,5-tetrahydrodipicolinate + NAD(+) + H2O = (2S,4S)-4-hydroxy-2,3,4,5-tetrahydrodipicolinate + NADH + H(+). The enzyme catalyses (S)-2,3,4,5-tetrahydrodipicolinate + NADP(+) + H2O = (2S,4S)-4-hydroxy-2,3,4,5-tetrahydrodipicolinate + NADPH + H(+). The protein operates within amino-acid biosynthesis; L-lysine biosynthesis via DAP pathway; (S)-tetrahydrodipicolinate from L-aspartate: step 4/4. Functionally, catalyzes the conversion of 4-hydroxy-tetrahydrodipicolinate (HTPA) to tetrahydrodipicolinate. The polypeptide is 4-hydroxy-tetrahydrodipicolinate reductase (Methanoregula boonei (strain DSM 21154 / JCM 14090 / 6A8)).